The sequence spans 277 residues: Phosphatidylserine decarboxylase proenzyme (277 aa).

Catalysis depends on charge relay system; for autoendoproteolytic cleavage activity residues aspartate 88, histidine 144, and serine 242. The active-site Schiff-base intermediate with substrate; via pyruvic acid; for decarboxylase activity is serine 242. The residue at position 242 (serine 242) is a Pyruvic acid (Ser); by autocatalysis.

Belongs to the phosphatidylserine decarboxylase family. PSD-B subfamily. Prokaryotic type I sub-subfamily. In terms of assembly, heterodimer of a large membrane-associated beta subunit and a small pyruvoyl-containing alpha subunit. Requires pyruvate as cofactor. In terms of processing, is synthesized initially as an inactive proenzyme. Formation of the active enzyme involves a self-maturation process in which the active site pyruvoyl group is generated from an internal serine residue via an autocatalytic post-translational modification. Two non-identical subunits are generated from the proenzyme in this reaction, and the pyruvate is formed at the N-terminus of the alpha chain, which is derived from the carboxyl end of the proenzyme. The autoendoproteolytic cleavage occurs by a canonical serine protease mechanism, in which the side chain hydroxyl group of the serine supplies its oxygen atom to form the C-terminus of the beta chain, while the remainder of the serine residue undergoes an oxidative deamination to produce ammonia and the pyruvoyl prosthetic group on the alpha chain. During this reaction, the Ser that is part of the protease active site of the proenzyme becomes the pyruvoyl prosthetic group, which constitutes an essential element of the active site of the mature decarboxylase.

The protein resides in the cell membrane. It catalyses the reaction a 1,2-diacyl-sn-glycero-3-phospho-L-serine + H(+) = a 1,2-diacyl-sn-glycero-3-phosphoethanolamine + CO2. Its pathway is phospholipid metabolism; phosphatidylethanolamine biosynthesis; phosphatidylethanolamine from CDP-diacylglycerol: step 2/2. Functionally, catalyzes the formation of phosphatidylethanolamine (PtdEtn) from phosphatidylserine (PtdSer). The protein is Phosphatidylserine decarboxylase proenzyme of Psychrobacter cryohalolentis (strain ATCC BAA-1226 / DSM 17306 / VKM B-2378 / K5).